Here is a 125-residue protein sequence, read N- to C-terminus: Small ribosomal subunit protein bS6 (125 aa).

The tract at residues 99–125 is disordered; that stretch reads ASPMVKAKDERRASAEVENNDFEDAEE. Residues 104–113 show a composition bias toward basic and acidic residues; it reads KAKDERRASA. The segment covering 116–125 has biased composition (acidic residues); that stretch reads ENNDFEDAEE.

This sequence belongs to the bacterial ribosomal protein bS6 family.

In terms of biological role, binds together with bS18 to 16S ribosomal RNA. This chain is Small ribosomal subunit protein bS6, found in Mannheimia succiniciproducens (strain KCTC 0769BP / MBEL55E).